Reading from the N-terminus, the 256-residue chain is uncharacterized protein (256 aa).

The first 24 residues, 1–24, serve as a signal peptide directing secretion; the sequence is MIKRVNKLVLGISLLFLVISIAAG. A lipid anchor (N-palmitoyl cysteine) is attached at cysteine 25. A lipid anchor (S-diacylglycerol cysteine) is attached at cysteine 25.

Belongs to the staphylococcal tandem lipoprotein family.

It is found in the cell membrane. This is an uncharacterized protein from Staphylococcus aureus.